The primary structure comprises 270 residues: tRNA pseudouridine synthase A (270 aa).

Residue aspartate 60 is the Nucleophile of the active site. An RNA binding region spans residues 107–111 (FHARF). Position 118 (tyrosine 118) interacts with substrate. The segment at 168–172 (QCQSR) is interaction with tRNA.

This sequence belongs to the tRNA pseudouridine synthase TruA family. As to quaternary structure, homodimer.

It carries out the reaction uridine(38/39/40) in tRNA = pseudouridine(38/39/40) in tRNA. In terms of biological role, formation of pseudouridine at positions 38, 39 and 40 in the anticodon stem and loop of transfer RNAs. The polypeptide is tRNA pseudouridine synthase A (Escherichia coli (strain 55989 / EAEC)).